Reading from the N-terminus, the 717-residue chain is Fatty acid oxidation complex subunit alpha (717 aa).

An enoyl-CoA hydratase/isomerase region spans residues M1–A189. Position 296 (D296) interacts with substrate. Positions K311–A717 are 3-hydroxyacyl-CoA dehydrogenase. NAD(+) contacts are provided by residues M324, D343, V400–E402, K407, and S429. H450 (for 3-hydroxyacyl-CoA dehydrogenase activity) is an active-site residue. N453 serves as a coordination point for NAD(+). Substrate contacts are provided by N500 and Y660.

The protein in the N-terminal section; belongs to the enoyl-CoA hydratase/isomerase family. This sequence in the C-terminal section; belongs to the 3-hydroxyacyl-CoA dehydrogenase family. In terms of assembly, heterotetramer of two alpha chains (FadB) and two beta chains (FadA).

It catalyses the reaction a (3S)-3-hydroxyacyl-CoA + NAD(+) = a 3-oxoacyl-CoA + NADH + H(+). It carries out the reaction a (3S)-3-hydroxyacyl-CoA = a (2E)-enoyl-CoA + H2O. The enzyme catalyses a 4-saturated-(3S)-3-hydroxyacyl-CoA = a (3E)-enoyl-CoA + H2O. The catalysed reaction is (3S)-3-hydroxybutanoyl-CoA = (3R)-3-hydroxybutanoyl-CoA. It catalyses the reaction a (3Z)-enoyl-CoA = a 4-saturated (2E)-enoyl-CoA. It carries out the reaction a (3E)-enoyl-CoA = a 4-saturated (2E)-enoyl-CoA. It functions in the pathway lipid metabolism; fatty acid beta-oxidation. In terms of biological role, involved in the aerobic and anaerobic degradation of long-chain fatty acids via beta-oxidation cycle. Catalyzes the formation of 3-oxoacyl-CoA from enoyl-CoA via L-3-hydroxyacyl-CoA. It can also use D-3-hydroxyacyl-CoA and cis-3-enoyl-CoA as substrate. This chain is Fatty acid oxidation complex subunit alpha, found in Shewanella piezotolerans (strain WP3 / JCM 13877).